We begin with the raw amino-acid sequence, 132 residues long: ATP synthase epsilon chain (132 aa).

This sequence belongs to the ATPase epsilon chain family. F-type ATPases have 2 components, CF(1) - the catalytic core - and CF(0) - the membrane proton channel. CF(1) has five subunits: alpha(3), beta(3), gamma(1), delta(1), epsilon(1). CF(0) has three main subunits: a, b and c.

It localises to the cell inner membrane. In terms of biological role, produces ATP from ADP in the presence of a proton gradient across the membrane. In Jannaschia sp. (strain CCS1), this protein is ATP synthase epsilon chain.